The chain runs to 333 residues: DNA primase small subunit PriS (333 aa).

Active-site residues include Asp-96, Asp-98, and Asp-237.

Belongs to the eukaryotic-type primase small subunit family. Heterodimer of a small subunit (PriS) and a large subunit (PriL). Mg(2+) serves as cofactor. Requires Mn(2+) as cofactor.

Its function is as follows. Catalytic subunit of DNA primase, an RNA polymerase that catalyzes the synthesis of short RNA molecules used as primers for DNA polymerase during DNA replication. The small subunit contains the primase catalytic core and has DNA synthesis activity on its own. Binding to the large subunit stabilizes and modulates the activity, increasing the rate of DNA synthesis while decreasing the length of the DNA fragments, and conferring RNA synthesis capability. The DNA polymerase activity may enable DNA primase to also catalyze primer extension after primer synthesis. May also play a role in DNA repair. The polypeptide is DNA primase small subunit PriS (Thermoplasma volcanium (strain ATCC 51530 / DSM 4299 / JCM 9571 / NBRC 15438 / GSS1)).